Reading from the N-terminus, the 328-residue chain is Probable ABC transporter permease YtrC (328 aa).

Helical transmembrane passes span 16–36 (VVIL…IVNT), 60–80 (ISNL…CFLG), 110–130 (GFVI…LILV), 144–164 (IGVI…GALT), 167–187 (AFAQ…IIAL), 236–256 (YLLL…FISF), 277–297 (VQIL…YYTG), and 300–320 (IIGY…VSYF).

It belongs to the ABC-5 integral membrane protein family. In terms of assembly, the complex is composed of 2 ATP-binding proteins (YtrB and YtrE), 2 transmembrane proteins (YtrC and YtrD) and a solute-binding protein (YtrF).

It is found in the cell membrane. In terms of biological role, part of the ABC transporter complex YtrBCDEF that plays a role in acetoin utilization during stationary phase and sporulation. In Bacillus subtilis (strain 168), this protein is Probable ABC transporter permease YtrC (ytrC).